We begin with the raw amino-acid sequence, 216 residues long: Thiamine-phosphate synthase (216 aa).

4-amino-2-methyl-5-(diphosphooxymethyl)pyrimidine contacts are provided by residues 40–44 (QLRIK) and N72. Residues D73 and D92 each contribute to the Mg(2+) site. S111 lines the 4-amino-2-methyl-5-(diphosphooxymethyl)pyrimidine pocket. Residue 137–139 (TTT) coordinates 2-[(2R,5Z)-2-carboxy-4-methylthiazol-5(2H)-ylidene]ethyl phosphate. K140 is a binding site for 4-amino-2-methyl-5-(diphosphooxymethyl)pyrimidine. 2-[(2R,5Z)-2-carboxy-4-methylthiazol-5(2H)-ylidene]ethyl phosphate-binding positions include G169 and 189-190 (VS).

It belongs to the thiamine-phosphate synthase family. It depends on Mg(2+) as a cofactor.

It carries out the reaction 2-[(2R,5Z)-2-carboxy-4-methylthiazol-5(2H)-ylidene]ethyl phosphate + 4-amino-2-methyl-5-(diphosphooxymethyl)pyrimidine + 2 H(+) = thiamine phosphate + CO2 + diphosphate. The enzyme catalyses 2-(2-carboxy-4-methylthiazol-5-yl)ethyl phosphate + 4-amino-2-methyl-5-(diphosphooxymethyl)pyrimidine + 2 H(+) = thiamine phosphate + CO2 + diphosphate. The catalysed reaction is 4-methyl-5-(2-phosphooxyethyl)-thiazole + 4-amino-2-methyl-5-(diphosphooxymethyl)pyrimidine + H(+) = thiamine phosphate + diphosphate. It functions in the pathway cofactor biosynthesis; thiamine diphosphate biosynthesis; thiamine phosphate from 4-amino-2-methyl-5-diphosphomethylpyrimidine and 4-methyl-5-(2-phosphoethyl)-thiazole: step 1/1. Condenses 4-methyl-5-(beta-hydroxyethyl)thiazole monophosphate (THZ-P) and 2-methyl-4-amino-5-hydroxymethyl pyrimidine pyrophosphate (HMP-PP) to form thiamine monophosphate (TMP). This Photorhabdus laumondii subsp. laumondii (strain DSM 15139 / CIP 105565 / TT01) (Photorhabdus luminescens subsp. laumondii) protein is Thiamine-phosphate synthase.